Consider the following 119-residue polypeptide: Large ribosomal subunit protein bL19 (119 aa).

Belongs to the bacterial ribosomal protein bL19 family.

This protein is located at the 30S-50S ribosomal subunit interface and may play a role in the structure and function of the aminoacyl-tRNA binding site. The protein is Large ribosomal subunit protein bL19 of Psychromonas ingrahamii (strain DSM 17664 / CCUG 51855 / 37).